Reading from the N-terminus, the 201-residue chain is dTTP/UTP pyrophosphatase (201 aa).

Catalysis depends on Asp-79, which acts as the Proton acceptor.

Belongs to the Maf family. YhdE subfamily. Requires a divalent metal cation as cofactor.

Its subcellular location is the cytoplasm. It carries out the reaction dTTP + H2O = dTMP + diphosphate + H(+). The catalysed reaction is UTP + H2O = UMP + diphosphate + H(+). Its function is as follows. Nucleoside triphosphate pyrophosphatase that hydrolyzes dTTP and UTP. May have a dual role in cell division arrest and in preventing the incorporation of modified nucleotides into cellular nucleic acids. In Hahella chejuensis (strain KCTC 2396), this protein is dTTP/UTP pyrophosphatase.